Here is a 132-residue protein sequence, read N- to C-terminus: Small ribosomal subunit protein uS8 (132 aa).

This sequence belongs to the universal ribosomal protein uS8 family. As to quaternary structure, part of the 30S ribosomal subunit. Contacts proteins S5 and S12.

In terms of biological role, one of the primary rRNA binding proteins, it binds directly to 16S rRNA central domain where it helps coordinate assembly of the platform of the 30S subunit. This chain is Small ribosomal subunit protein uS8, found in Mycobacterium sp. (strain KMS).